Here is a 383-residue protein sequence, read N- to C-terminus: S-adenosylmethionine synthase (383 aa).

ATP is bound at residue histidine 15. A Mg(2+)-binding site is contributed by aspartate 17. A K(+)-binding site is contributed by glutamate 43. L-methionine-binding residues include glutamate 56 and glutamine 99. Positions glutamine 99 to arginine 109 are flexible loop. ATP-binding positions include aspartate 164–lysine 166, arginine 230–phenylalanine 231, aspartate 239, arginine 245–lysine 246, alanine 262, and lysine 266. Aspartate 239 contributes to the L-methionine binding site. Lysine 270 lines the L-methionine pocket.

This sequence belongs to the AdoMet synthase family. As to quaternary structure, homotetramer; dimer of dimers. The cofactor is Mg(2+). It depends on K(+) as a cofactor.

It is found in the cytoplasm. It carries out the reaction L-methionine + ATP + H2O = S-adenosyl-L-methionine + phosphate + diphosphate. It participates in amino-acid biosynthesis; S-adenosyl-L-methionine biosynthesis; S-adenosyl-L-methionine from L-methionine: step 1/1. Catalyzes the formation of S-adenosylmethionine (AdoMet) from methionine and ATP. The overall synthetic reaction is composed of two sequential steps, AdoMet formation and the subsequent tripolyphosphate hydrolysis which occurs prior to release of AdoMet from the enzyme. This is S-adenosylmethionine synthase from Mannheimia succiniciproducens (strain KCTC 0769BP / MBEL55E).